A 2274-amino-acid polypeptide reads, in one-letter code: Adenomatous polyposis coli protein 2 (2274 aa).

Residues 5–59 (MASYEQLVRQVEALKAENTHLRQELRDNSSHLSKLETETSGMKEVLKHLQGKLEQ) adopt a coiled-coil conformation. Disordered regions lie at residues 97 to 120 (GPEPAARTPEGSPVHGSGPSKDSF) and 248 to 269 (VEEEQEAEVPTHPEDGTPQPGN). ARM repeat units lie at residues 301–341 (PESC…GAKD), 472–511 (ANKATLCARRGCMEAIVAQLGSESEELHQVVSSILRNLSW), 515–555 (INSK…NLSA), 557–602 (STEN…NVSS), 608–647 (EDYRQVLRDHNCLQTLLQHLTSHSLTIVSNACGTLWNLSA), and 650–689 (PRDQELLWDLGAVGMLRNLVHSKHKMIAMGSAAALRNLLA). Residues 832-856 (AAKAKAKLALAVARIDRLVEDISAL) are a coiled coil. 3 disordered regions span residues 859-901 (SSDD…GSRA), 1061-1143 (CSSL…NCVQ), and 1165-1216 (SIAS…TSQF). Over residues 861–870 (DDSFSLSSGD) the composition is skewed to low complexity. Copy 1 of the repeat occupies 1049-1068 (LVAQDGPMSLSRCSSLSSLS). The segment at 1049 to 1565 (LVAQDGPMSL…SLTSSASSLS (517 aa)) is 5 X 20 AA approximate repeat of F-X-V-E-X-T-P-X-C-F-S-R-X-S-S-L-S-S-L-S. The segment at 1049-1565 (LVAQDGPMSL…SLTSSASSLS (517 aa)) is interaction with CTNNB1. Residues 1077-1086 (QAENLDSDSS) show a composition bias toward polar residues. Residues 1092 to 1103 (EAGPGEAELGRA) show a composition bias toward low complexity. Over residues 1133-1143 (TPSSSSENCVQ) the composition is skewed to polar residues. Residues 1140 to 1159 (NCVQETPLVLSRCSSVSSLG) form repeat 2. The stretch at 1250–1269 (FTVEKPDENFSCASSLSALA) is repeat 3. Disordered stretches follow at residues 1290 to 1323 (ERAVGGGGHRRRDEAASRLDGPAPAGSRARSATD), 1368 to 1480 (RGDD…LQSL), 1493 to 1631 (FYDS…DIRP), 1699 to 2003 (STLQ…RGRP), 2022 to 2122 (PRQP…IKDE), and 2135 to 2274 (TALP…SLLE). A compositionally biased stretch (polar residues) spans 1374–1397 (TDSAEGTPVNFSSAASLSDETLQG). The stretch at 1375–1394 (DSAEGTPVNFSSAASLSDET) is repeat 4. Residues 1399–1411 (SRDKPAGPGDRQK) show a composition bias toward basic and acidic residues. Residues 1455–1470 (RPQSARSNRDSSCQTR) show a composition bias toward polar residues. Basic and acidic residues predominate over residues 1517–1529 (LKREKPAGRKETP). Repeat 5 spans residues 1546 to 1565 (LIVDETPPCYSLTSSASSLS). The span at 1556–1574 (SLTSSASSLSEPEAPEQPA) shows a compositional bias: low complexity. Phosphoserine is present on residues Ser1563 and Ser1565. Residues 1608–1624 (PRRRTQVPGSRRRKPRA) are compositionally biased toward basic residues. Low complexity-rich tracts occupy residues 1780 to 1795 (SGPCTTPKKTGTSGTT) and 1839 to 1868 (LAKTPSSSSSQTSPASQPLPRRSPLATPTG). Residues 1792–1871 (SGTTQPETVT…PLATPTGGPL (80 aa)) are required for localization to microtubules and function in microtubule stabilization. Ser1861 carries the phosphoserine modification. Positions 1910–1921 (RVPPPLARPSPE) are enriched in pro residues. 2 stretches are compositionally biased toward low complexity: residues 1945–1955 (RMASARSSGSE) and 1983–1997 (LSSADSTASTSQAAS). Residues 2037–2114 (GLAPLAPRRT…PLPRVAPPGT (78 aa)) form an interaction with MAPRE1 and MAPRE3 region. Over residues 2165 to 2179 (DVATSKTNSSTSPSL) the composition is skewed to polar residues.

Belongs to the adenomatous polyposis coli (APC) family. Interacts with PSRC1. Interacts with MAPRE3. Interacts with APC, CTNNB1, TP53BP2, MAPRE1 and possibly with AXIN2. In terms of tissue distribution, expressed in brain and other neural tissues.

The protein resides in the cytoplasm. The protein localises to the cytoskeleton. It localises to the golgi apparatus. It is found in the perinuclear region. Functionally, stabilizes microtubules and may regulate actin fiber dynamics through the activation of Rho family GTPases. May also function in Wnt signaling by promoting the rapid degradation of CTNNB1. This Mus musculus (Mouse) protein is Adenomatous polyposis coli protein 2 (Apc2).